The sequence spans 221 residues: Type 3 secretion system stator protein (221 aa).

It belongs to the SctL stator family. As to quaternary structure, the core secretion machinery of the T3SS is composed of approximately 20 different proteins, including cytoplasmic components, a base, an export apparatus and a needle. This subunit is part of the cytosolic complex. Interacts directly with YscN/SctN (T3SS ATPase) and YscQ/SctQ (the major sorting platform component).

It localises to the cytoplasm. In terms of biological role, component of the type III secretion system (T3SS), also called injectisome, which is used to inject bacterial effector proteins into eukaryotic host cells. Acts as a regulator of the YscN/SctN ATPase activity. In Yersinia pestis, this protein is Type 3 secretion system stator protein.